Consider the following 407-residue polypeptide: Putative glucose/galactose transporter (407 aa).

A run of 12 helical transmembrane segments spans residues 11 to 31, 47 to 67, 70 to 90, 96 to 116, 139 to 159, 180 to 200, 225 to 245, 263 to 283, 300 to 320, 321 to 341, 349 to 369, and 378 to 398; these read GSLTALFFLMGFITVLNDILI, LIQFCFFGAYFIMGGVFGNVI, IGYPFGVVLGFVITATGCALF, FGSYGFFLGALFILASGIVCL, VQAFNSLGTTLGPIFGSLLIF, VQMPYLGLAVFSLLLALIMYL, FVFGALGIFFYVGGEVAIGSF, HYLVYYWGGAMVGRFLGSVLM, IVLIALAIIIGGKIALFALTF, VGFFNSIMFPTIFSLATLNLG, GVISMAIVGGALIPPIQGAVT, and NLLYAYGVPLLCYFYILFFAL.

The protein belongs to the major facilitator superfamily. FHS transporter (TC 2.A.1.7) family.

It is found in the cell inner membrane. Intake of glucose and galactose. The polypeptide is Putative glucose/galactose transporter (gluP) (Helicobacter pylori (strain ATCC 700392 / 26695) (Campylobacter pylori)).